A 296-amino-acid chain; its full sequence is Protoheme IX farnesyltransferase (296 aa).

The next 9 helical transmembrane spans lie at 11-31 (PGIIFGNLISVIGGFLLAAQG), 35-55 (YPLFLATLVGVSLVVASGCVF), 84-104 (VTLVYASLLGIAGFALLYVAA), 107-127 (LAMWLAVMGFVVYVGVYSLYM), 132-152 (VYGTLIGSLSGAAPPVIGYCA), 162-182 (LILLLIFSLWQMPHSYAIAIF), 208-228 (ITLYIVAFAIATLMLSLGGYA), 229-249 (GYKYLIVAAAVSVWWLGMALS), and 264-284 (LFVFSIVAITSLSVMMSVDSM).

This sequence belongs to the UbiA prenyltransferase family. Protoheme IX farnesyltransferase subfamily.

The protein resides in the cell inner membrane. It catalyses the reaction heme b + (2E,6E)-farnesyl diphosphate + H2O = Fe(II)-heme o + diphosphate. It functions in the pathway porphyrin-containing compound metabolism; heme O biosynthesis; heme O from protoheme: step 1/1. In terms of biological role, converts heme B (protoheme IX) to heme O by substitution of the vinyl group on carbon 2 of heme B porphyrin ring with a hydroxyethyl farnesyl side group. The sequence is that of Protoheme IX farnesyltransferase from Pectobacterium atrosepticum (strain SCRI 1043 / ATCC BAA-672) (Erwinia carotovora subsp. atroseptica).